The chain runs to 449 residues: Exodeoxyribonuclease 7 large subunit (449 aa).

This sequence belongs to the XseA family. In terms of assembly, heterooligomer composed of large and small subunits.

It localises to the cytoplasm. It catalyses the reaction Exonucleolytic cleavage in either 5'- to 3'- or 3'- to 5'-direction to yield nucleoside 5'-phosphates.. In terms of biological role, bidirectionally degrades single-stranded DNA into large acid-insoluble oligonucleotides, which are then degraded further into small acid-soluble oligonucleotides. The polypeptide is Exodeoxyribonuclease 7 large subunit (Aliivibrio fischeri (strain MJ11) (Vibrio fischeri)).